The chain runs to 146 residues: Meiotically up-regulated gene 151 protein (146 aa).

A disordered region spans residues 1 to 40 (MSLVAYDSEEEEQTSLVNENNDIKGRSEEPHWKIPNSPKA). Residues 21–32 (NDIKGRSEEPHW) are compositionally biased toward basic and acidic residues.

It is found in the nucleus. In terms of biological role, has a role in meiosis. The sequence is that of Meiotically up-regulated gene 151 protein (mug151) from Schizosaccharomyces pombe (strain 972 / ATCC 24843) (Fission yeast).